The sequence spans 157 residues: MLCDSIESFFGALGADRRILGLDFGEKKFGLAVSDSTGTIAMPHSVYLRRNVRQDLGELNAILKREGICAAVVGLPLQLDGMEGEMCAVVRSFVQKLIKKSGVYVYLHDERFTTAMASRTTESLGLRRKASQKVDDKISAALILQQVLDMAKGRGII.

Belongs to the YqgF nuclease family.

The protein localises to the cytoplasm. Could be a nuclease involved in processing of the 5'-end of pre-16S rRNA. The polypeptide is Putative pre-16S rRNA nuclease (Anaplasma marginale (strain St. Maries)).